A 530-amino-acid chain; its full sequence is Ubiquitin carboxyl-terminal hydrolase 17 (530 aa).

The 296-residue stretch at 80–375 (AGLQNMGNTC…QAYVLFYIQK (296 aa)) folds into the USP domain. C89 functions as the Nucleophile in the catalytic mechanism. H334 serves as the catalytic Proton acceptor. Composition is skewed to basic and acidic residues over residues 382–392 (SESVSRGREPR) and 398–413 (DTDRRATQGELKRDHP). Disordered regions lie at residues 382–416 (SESVSRGREPRALGAEDTDRRATQGELKRDHPCLQ) and 490–530 (SSTT…LVCQ). The segment at 399-530 (TDRRATQGEL…HSKRALLVCQ (132 aa)) is mediates interaction with SUDS3. Over residues 498 to 510 (ESVNTGTLASLQG) the composition is skewed to polar residues. Residues 511-524 (RTRRSKGKNKHSKR) show a composition bias toward basic residues.

It belongs to the peptidase C19 family. USP17 subfamily. Interacts with SUDS3; the interaction is direct. As to expression, broadly expressed.

It is found in the nucleus. Its subcellular location is the endoplasmic reticulum. It carries out the reaction Thiol-dependent hydrolysis of ester, thioester, amide, peptide and isopeptide bonds formed by the C-terminal Gly of ubiquitin (a 76-residue protein attached to proteins as an intracellular targeting signal).. Its function is as follows. Deubiquitinating enzyme that removes conjugated ubiquitin from specific proteins to regulate different cellular processes. Regulates cell proliferation by deubiquitinating and inhibiting RCE1 thereby controlling the small GTPases NRAS and HRAS localization and activation. In parallel, mediates deubiquitination of CDC25A, preventing CDC25A degradation by the proteasome during the G1/S and G2/M phases promoting cell-cycle progression. Also regulates cell proliferation and apoptosis through deubiquitination of SUDS3 a regulator of histone deacetylation. Through activation of the Rho family GTPases RAC1A, CDC42 and RHOA, regulates cell migration. Through the cleavage of 'Lys-48'- and 'Lys-63'-linked polyubiquitin chains of the cytoplasmic innate immune receptors RIGI and IFIH1 stimulates the cellular response to viral infection. In Homo sapiens (Human), this protein is Ubiquitin carboxyl-terminal hydrolase 17 (USP17L2).